A 222-amino-acid polypeptide reads, in one-letter code: MKLPLLLALLFGAVSALHLRSETSTFETPLGAKTLPEDEETPEQEMEETPCRELEEEEEWGSGSEDASKKDGAVESISVPDMVDKNLTCPEEEDTVKVVGIPGCQTCRYLLVRSLQTFSQAWFTCRRCYRGNLVSIHNFNINYRIQCSVSALNQGQVWIGGRITGSGRCRRFQWVDGSRWNFAYWAAHQPWSRGGHCVALCTRGGHWRRAHCLRRLPFICSY.

A signal peptide spans 1-16; that stretch reads MKLPLLLALLFGAVSA. Positions 17–105 are cleaved as a propeptide — acidic; sequence LHLRSETSTF…VKVVGIPGCQ (89 aa). Residue threonine 23 is glycosylated (O-linked (GalNAc...) threonine; partial). A glycan (O-linked (GalNAc...) serine) is linked at serine 24. O-linked (GalNAc...) threonine glycosylation occurs at threonine 25. A disordered region spans residues 25 to 75; it reads TFETPLGAKTLPEDEETPEQEMEETPCRELEEEEEWGSGSEDASKKDGAVE. A glycan (O-linked (GalNAc...) threonine; partial) is linked at threonine 34. Acidic residues predominate over residues 37–60; the sequence is EDEETPEQEMEETPCRELEEEEEW. Residue serine 62 is glycosylated (O-linked (Xyl...) (chondroitin sulfate) serine). Asparagine 86 carries N-linked (GlcNAc...) asparagine glycosylation. Positions 104–222 constitute a C-type lectin domain; it reads CQTCRYLLVR…LRRLPFICSY (119 aa). 2 disulfides stabilise this stretch: cysteine 125–cysteine 220 and cysteine 197–cysteine 212.

In pregnancy serum, the proform exists as a disulfide-linked 2:2 heterotetramer with PAPPA, as a disulfide-linked 2:2 heterotetramer with AGT, and as a complex (probably a 2:2:2 heterohexamer) with AGT and C3dg. In terms of processing, nitrated. Detected in plasma and urine (at protein level). Detected in placenta (at protein level). High levels of the proform in placenta and pregnancy serum; in placenta, localized to X cells of septa and anchoring villi. Lower levels in a variety of other tissues including kidney, myometrium, endometrium, ovaries, breast, prostate, bone marrow and colon.

Its subcellular location is the secreted. The protein resides in the cytoplasmic vesicle. It localises to the secretory vesicle. Cytotoxin and helminthotoxin. Also induces non-cytolytic histamine release from human basophils. Involved in antiparasitic defense mechanisms and immune hypersensitivity reactions. The proform acts as a proteinase inhibitor, reducing the activity of PAPPA. This is Bone marrow proteoglycan (PRG2) from Homo sapiens (Human).